Here is a 130-residue protein sequence, read N- to C-terminus: L-ectoine synthase (130 aa).

This sequence belongs to the ectoine synthase family.

The catalysed reaction is (2S)-4-acetamido-2-aminobutanoate = L-ectoine + H2O. It participates in amine and polyamine biosynthesis; ectoine biosynthesis; L-ectoine from L-aspartate 4-semialdehyde: step 3/3. Functionally, catalyzes the circularization of gamma-N-acetyl-alpha,gamma-diaminobutyric acid (ADABA) to ectoine (1,4,5,6-tetrahydro-2-methyl-4-pyrimidine carboxylic acid), which is an excellent osmoprotectant. The protein is L-ectoine synthase of Mycolicibacterium gilvum (strain PYR-GCK) (Mycobacterium gilvum (strain PYR-GCK)).